A 105-amino-acid chain; its full sequence is MLNWDLQKNNDKITLFLFGELSRSTLLPMWQQRGVFLSASTLDKTIVEWNLSDLQHIDSAGFAALCDFLRECQKLNKTVRLVYPPKQLLTLADLFGLSDWIANFI.

Residues 4-105 form the STAS domain; sequence WDLQKNNDKI…GLSDWIANFI (102 aa).

The complex is composed of two ATP-binding proteins (MlaF), two transmembrane proteins (MlaE), two cytoplasmic solute-binding proteins (MlaB) and six periplasmic solute-binding proteins (MlaD).

The protein localises to the cytoplasm. Functionally, part of the ABC transporter complex MlaFEDB, which is involved in a phospholipid transport pathway that maintains lipid asymmetry in the outer membrane by retrograde trafficking of phospholipids from the outer membrane to the inner membrane. MlaB plays critical roles in both the assembly and activity of the complex. May act by modulating MlaF structure and stability. This chain is Intermembrane phospholipid transport system binding protein MlaB, found in Haemophilus influenzae (strain ATCC 51907 / DSM 11121 / KW20 / Rd).